Here is a 141-residue protein sequence, read N- to C-terminus: Zinc finger HIT domain-containing protein 3 (141 aa).

The HIT-type; degenerate zinc finger occupies 1 to 28 (LEKPKYRCPACRVPYCSVACFRKHKEQC). Zn(2+)-binding residues include cysteine 8, cysteine 11, histidine 24, and cysteine 28. Serine 66 carries the phosphoserine modification.

Thyroid receptor interacting proteins (TRIPs) specifically interact with the ligand binding domain of the thyroid receptor (TR). Requires the presence of thyroid hormone for its interaction. Interacts with NUFIP1. Interacts (via HIT-type zinc finger) with the RUVBL1/RUVBL2 complex in the presence of ADP.

The protein localises to the cytoplasm. Its subcellular location is the nucleus. The chain is Zinc finger HIT domain-containing protein 3 (ZNHIT3) from Pan troglodytes (Chimpanzee).